The primary structure comprises 227 residues: MPKLLPPVVLAGCVVALGACSSPQHASSLPGTTPAVWTGSPSPSGAGAAEAAPAAAPSITTHLKAPDGTQVATAKFEFSNGYATVTIETTANGVLTPGFHGVHIHKVGKCEPSSVAPTGGAPGDFLSAGGHFQAPGHTGEPASGDLTSLQVRKDGSGTLVTTTDAFTMEDLLGGRKTAIIIHAGADNFANIPAERYNQTNGTPGPDEMTMSTGDAGKRVACGVIGAG.

Positions 1–19 (MPKLLPPVVLAGCVVALGA) are cleaved as a signal peptide. The N-palmitoyl cysteine moiety is linked to residue Cys-20. Cys-20 carries S-diacylglycerol cysteine lipidation. The disordered stretch occupies residues 23-55 (PQHASSLPGTTPAVWTGSPSPSGAGAAEAAPAA). The span at 39 to 55 (GSPSPSGAGAAEAAPAA) shows a compositional bias: low complexity. 2 residues coordinate Cu cation: His-103 and His-105. Cys-110 and Cys-221 are oxidised to a cystine. Asp-145 serves as a coordination point for Zn(2+). His-182 is a Cu cation binding site.

It belongs to the Cu-Zn superoxide dismutase family. It depends on Cu cation as a cofactor. The cofactor is Zn(2+).

The protein resides in the cell membrane. The catalysed reaction is 2 superoxide + 2 H(+) = H2O2 + O2. In terms of biological role, destroys radicals which are normally produced within the cells and which are toxic to biological systems. May play a role in favoring mycobacterial survival in phagocytes. In Mycolicibacterium paratuberculosis (strain ATCC BAA-968 / K-10) (Mycobacterium paratuberculosis), this protein is Superoxide dismutase [Cu-Zn] (sodC).